The primary structure comprises 685 residues: Mannan-binding lectin serine protease 2 (685 aa).

Positions 1 to 19 (MRLLIFLGLLWSLVATLLG) are cleaved as a signal peptide. The 118-residue stretch at 20 to 137 (SKWPEPVFGR…TGFEAFYAAE (118 aa)) folds into the CUB 1 domain. Ca(2+) contacts are provided by Glu-67 and Asp-75. Cys-72 and Cys-90 are disulfide-bonded. The N-linked (GlcNAc...) asparagine glycan is linked to Asn-103. Asp-120, Ser-122, Asn-123, Asp-138, and Glu-141 together coordinate Ca(2+). An EGF-like; calcium-binding domain is found at 138-181 (DVDECRVSLGDSVPCDHYCHNYLGGYYCSCRAGYVLHQNKHTCS). Cystine bridges form between Cys-142–Cys-156, Cys-152–Cys-165, Cys-167–Cys-180, Cys-184–Cys-211, and Cys-241–Cys-259. Residues Asn-158 and Gly-162 each contribute to the Ca(2+) site. The residue at position 158 (Asn-158) is a (3R)-3-hydroxyasparagine. One can recognise a CUB 2 domain in the interval 184–296 (CSGQVFTGRS…TGWKIHYTST (113 aa)). N-linked (GlcNAc...) asparagine glycans are attached at residues Asn-285 and Asn-308. Sushi domains follow at residues 298 to 363 (RPCP…ECSI) and 364 to 431 (IDCG…VCEP). 7 cysteine pairs are disulfide-bonded: Cys-300/Cys-348, Cys-328/Cys-361, Cys-366/Cys-411, Cys-396/Cys-429, Cys-433/Cys-552, Cys-598/Cys-617, and Cys-628/Cys-659. The region spanning 444–683 (IVGGQPAKPG…YIPWIENIIS (240 aa)) is the Peptidase S1 domain. Catalysis depends on charge relay system residues His-483 and Asp-532. An N-linked (GlcNAc...) asparagine glycan is attached at Asn-545. Catalysis depends on Ser-632, which acts as the Charge relay system. N-linked (GlcNAc...) asparagine glycosylation is present at Asn-641.

It belongs to the peptidase S1 family. Homodimer; disulfide-linked. Binds MBL2. Isoform 2 binds to MASP1. Binds SERPING1. Post-translationally, the iron and 2-oxoglutarate dependent 3-hydroxylation of aspartate and asparagine is (R) stereospecific within EGF domains. Plasma.

Its subcellular location is the secreted. The catalysed reaction is Selective cleavage after Arg-223 in complement component C2 (-Ser-Leu-Gly-Arg-|-Lys-Ile-Gln-Ile) and after Arg-76 in complement component C4 (-Gly-Leu-Gln-Arg-|-Ala-Leu-Glu-Ile).. Its function is as follows. Serum protease that plays an important role in the activation of the complement system via mannose-binding lectin. After activation by auto-catalytic cleavage it cleaves C2 and C4, leading to their activation and to the formation of C3 convertase. The chain is Mannan-binding lectin serine protease 2 (Masp2) from Mus musculus (Mouse).